The chain runs to 282 residues: Diaminopimelate epimerase (282 aa).

Substrate-binding residues include asparagine 13, glutamine 45, and asparagine 64. Cysteine 73 serves as the catalytic Proton donor. Residues 74–75 (GN), asparagine 155, asparagine 189, and 207–208 (ER) contribute to the substrate site. Catalysis depends on cysteine 216, which acts as the Proton acceptor. Substrate is bound at residue 217–218 (GS).

Belongs to the diaminopimelate epimerase family. Homodimer.

Its subcellular location is the cytoplasm. It carries out the reaction (2S,6S)-2,6-diaminopimelate = meso-2,6-diaminopimelate. The protein operates within amino-acid biosynthesis; L-lysine biosynthesis via DAP pathway; DL-2,6-diaminopimelate from LL-2,6-diaminopimelate: step 1/1. Catalyzes the stereoinversion of LL-2,6-diaminopimelate (L,L-DAP) to meso-diaminopimelate (meso-DAP), a precursor of L-lysine and an essential component of the bacterial peptidoglycan. The chain is Diaminopimelate epimerase from Bartonella bacilliformis (strain ATCC 35685 / KC583 / Herrer 020/F12,63).